Reading from the N-terminus, the 523-residue chain is Heparanase (523 aa).

The signal sequence occupies residues 1 to 18 (MLVLLLLVLLLAVPPRRT). Heparan sulfate group contacts are provided by residues 42–44 (DAS), Thr77, and 137–141 (KKHKN). Residues Asn141 and Asn196 are each glycosylated (N-linked (GlcNAc...) asparagine). The active-site Proton donor is the Glu204. Residues 250-260 (QPRKHTQHLLR), His276, and Arg283 each bind heparan sulfate group. Positions 268-397 (KAIDSVTWHH…LLYKRLVGTR (130 aa)) are required for heterodimerization with the heparanase 8 kDa subunit. Glu323 (nucleophile) is an active-site residue. Residues 328–330 (YGG) and 369–371 (GSY) each bind heparan sulfate group. An intrachain disulfide couples Cys417 to Cys522. Asn436 and Asn439 each carry an N-linked (GlcNAc...) asparagine glycan. The required for transferring proheparanase to the Golgi apparatus, secretion and subsequent enzyme activity and for enhancement of PKB/AKT1 phosphorylation stretch occupies residues 507 to 523 (FSYGFYVIRNAKAIACI).

The protein belongs to the glycosyl hydrolase 79 family. As to quaternary structure, heterodimer; the active enzyme is a heterodimer of the 60 kDa and 45 kDa proteolytic products. In terms of processing, N-glycosylated. Proteolytically cleaved to produce a 60 kDa and a 45 kDa product.

It localises to the secreted. The catalysed reaction is endohydrolysis of (1-&gt;4)-beta-D-glycosidic bonds of heparan sulfate chains in heparan sulfate proteoglycan.. Functionally, endoglycosidase that cleaves heparan sulfate proteoglycans (HSPGs) into heparan sulfate side chains and core proteoglycans. Participates in extracellular matrix (ECM) degradation and remodeling. Selectively cleaves the linkage between a glucuronic acid unit and an N-sulfo glucosamine unit carrying either a 3-O-sulfo or a 6-O-sulfo group. Can also cleave the linkage between a glucuronic acid unit and an N-sulfo glucosamine unit carrying a 2-O-sulfo group, but not linkages between a glucuronic acid unit and a 2-O-sulfated iduronic acid moiety. Increases cell adhesion to the extracellular matrix (ECM), independent of its enzymatic activity. This Gallus gallus (Chicken) protein is Heparanase (HPSE).